Here is an 87-residue protein sequence, read N- to C-terminus: U3-theraphotoxin-Hhn1a 5 (87 aa).

Residues 1–24 (MVNMKASMFLTFAGLVLLFVVCYA) form the signal peptide. The propeptide occupies 25–52 (SESEEKEFPKEMLSSIFAVDNDFKQEER). 3 disulfides stabilise this stretch: Cys-54–Cys-67, Cys-61–Cys-72, and Cys-66–Cys-79.

This sequence belongs to the neurotoxin 10 (Hwtx-1) family. 51 (Hntx-8) subfamily. Hntx-8 sub-subfamily. Expressed by the venom gland.

It localises to the secreted. Ion channel inhibitor. This chain is U3-theraphotoxin-Hhn1a 5, found in Cyriopagopus hainanus (Chinese bird spider).